Reading from the N-terminus, the 144-residue chain is 3-hydroxyacyl-[acyl-carrier-protein] dehydratase FabZ (144 aa).

Histidine 52 is a catalytic residue.

Belongs to the thioester dehydratase family. FabZ subfamily.

Its subcellular location is the cytoplasm. It catalyses the reaction a (3R)-hydroxyacyl-[ACP] = a (2E)-enoyl-[ACP] + H2O. Involved in unsaturated fatty acids biosynthesis. Catalyzes the dehydration of short chain beta-hydroxyacyl-ACPs and long chain saturated and unsaturated beta-hydroxyacyl-ACPs. This Syntrophomonas wolfei subsp. wolfei (strain DSM 2245B / Goettingen) protein is 3-hydroxyacyl-[acyl-carrier-protein] dehydratase FabZ.